The chain runs to 616 residues: Tumor necrosis factor receptor superfamily member 11A (616 aa).

Residues 1-29 (MAPRARRRRPLFALLLLCALLARLQVALQ) form the signal peptide. The Extracellular segment spans residues 30 to 212 (IAPPCTSEKH…PPNEPHVYLP (183 aa)). 9 disulfide bridges follow: Cys-34/Cys-46, Cys-47/Cys-60, Cys-50/Cys-68, Cys-71/Cys-86, Cys-92/Cys-112, Cys-114/Cys-127, Cys-124/Cys-126, Cys-133/Cys-151, and Cys-154/Cys-169. 4 TNFR-Cys repeats span residues 34 to 68 (CTSE…DSVC), 71 to 112 (CGPD…PRRC), 114 to 151 (CTAG…DTVC), and 154 to 194 (CLAG…DAVC). A glycan (N-linked (GlcNAc...) asparagine) is linked at Asn-105. Na(+)-binding residues include Cys-133, Ala-134, and Ser-160. A glycan (N-linked (GlcNAc...) asparagine) is linked at Asn-174. Cys-175 and Cys-194 form a disulfide bridge. A helical membrane pass occupies residues 213–233 (GLIILLLFASVALVAAIIFGV). The Cytoplasmic portion of the chain corresponds to 234-616 (CYRKKGKALT…PVQEQGGAKA (383 aa)). The segment at 468-536 (PLPQCAYGMG…GNSNSTFISS (69 aa)) is disordered. A compositionally biased stretch (basic and acidic residues) spans 483–493 (EASRTEARDQP). Positions 499–508 (GRLPSSARAG) are enriched in low complexity. The span at 524 to 536 (NVTGNSNSTFISS) shows a compositional bias: polar residues. The interval 544-549 (GDIIVV) is required for interaction with EEIG1 and osteoclast differentiation. Positions 556–616 (QEGAAAAAEP…PVQEQGGAKA (61 aa)) are disordered. Residues 570 to 580 (VQEETLARRDS) are compositionally biased toward basic and acidic residues. Phosphoserine is present on Ser-580.

Binds to the clefts between the subunits of the TNFSF11 ligand trimer to form a heterohexamer. Part of a complex composed of EEIG1, TNFRSF11A/RANK, PLCG2, GAB2, TEC and BTK; complex formation increases in the presence of TNFSF11/RANKL. Interacts with TRAF1, TRAF2, TRAF3, TRAF5 and TRAF6. Interacts (via cytoplasmic domain) with GAB2. Interacts (via cytoplasmic domain); with EEIG1 (via N-terminus); when in the presence of TNFSF11/RANKL. Ubiquitous expression with high levels in skeletal muscle, thymus, liver, colon, small intestine and adrenal gland.

Its subcellular location is the cell membrane. The protein resides in the membrane raft. In terms of biological role, receptor for TNFSF11/RANKL/TRANCE/OPGL; essential for RANKL-mediated osteoclastogenesis. Its interaction with EEIG1 promotes osteoclastogenesis via facilitating the transcription of NFATC1 and activation of PLCG2. Involved in the regulation of interactions between T-cells and dendritic cells. The polypeptide is Tumor necrosis factor receptor superfamily member 11A (TNFRSF11A) (Homo sapiens (Human)).